The following is a 339-amino-acid chain: Sphingomyelinase D (339 aa).

Residues Met1 to Gly21 form the signal peptide. Residue His60 is part of the active site. Positions 80, 82, and 128 each coordinate Mg(2+). An SMD-tail motif is present at residues Ala309–Trp316. The disordered stretch occupies residues Asp313–His339. The segment covering Ser317–Ser328 has biased composition (low complexity).

It belongs to the sphingomyelinase D/phospholipase D family. Requires Mg(2+) as cofactor.

It is found in the secreted. It catalyses the reaction a sphingomyelin + H2O = an N-acylsphing-4-enine 1-phosphate + choline + H(+). In terms of biological role, catalyzes the hydrolysis of sphingomyelin. Sphingomyelinases D are produced by some spider in their venoms, but also by arthropods such as ticks, or pathogenic bacteria and fungi. They might play a role in pathogenicity through different mechanisms, such as membrane destabilization and host cell penetration, but also pulmonary inflammation and cutaneous lesions. This chain is Sphingomyelinase D, found in Arthroderma benhamiae (strain ATCC MYA-4681 / CBS 112371) (Trichophyton mentagrophytes).